Consider the following 1098-residue polypeptide: Restriction of telomere capping protein 1 (1098 aa).

Residues 26-57 (NSSTPQSHEISPSSSLGSSRSNKQTNQYSSQE) form a disordered region. Low complexity predominate over residues 32-46 (SHEISPSSSLGSSRS). A compositionally biased stretch (polar residues) spans 47-57 (NKQTNQYSSQE). WD repeat units follow at residues 131–170 (ATNK…QSKV), 176–215 (DHSR…TKPV), 222–266 (LHSD…GGKV), 275–314 (LHTG…SRNT), 367–417 (DPTI…SFNS), and 432–473 (IEDL…TYED). Positions 535–562 (QNEPVTPSSSSSIPNMHLSSSRPKLTRN) are enriched in polar residues. The interval 535–597 (QNEPVTPSSS…YSSPQYKRNQ (63 aa)) is disordered. Residues 563 to 593 (TSQTTQDSSSSQLSSVIPPPSSSQTYSSPQY) show a composition bias toward low complexity. The WD 7 repeat unit spans residues 635–673 (PDGFTLVDVCLINASVAASVNNNRTSQVWKLLAVSIQEE). Residues 731–742 (KSTSTSGSQFGK) are compositionally biased toward polar residues. Residues 731–843 (KSTSTSGSQF…LKSSPPSVGV (113 aa)) form a disordered region. Low complexity predominate over residues 768–778 (SRNSSFSTTSF). A compositionally biased stretch (basic and acidic residues) spans 779-804 (RLKEQERREHELRNTQNFRDENEKVS). A compositionally biased stretch (polar residues) spans 806–816 (HSKSAPISISS). The WD 8 repeat unit spans residues 891-934 (DVSNGVTMMGTSGLSLALKRNKTNEEGCEFVKVWKFKSLLRKSL). Residues 1050-1093 (CVYCNEPCKGLAVTVGLKCGHQGHFGCLKEWFIEDQNTECPGGC) form an RING-type; degenerate zinc finger.

The protein belongs to the WD repeat RTC1 family.

The protein localises to the vacuole. Functionally, may be involved in a process influencing telomere capping. The polypeptide is Restriction of telomere capping protein 1 (RTC1) (Candida dubliniensis (strain CD36 / ATCC MYA-646 / CBS 7987 / NCPF 3949 / NRRL Y-17841) (Yeast)).